Here is a 328-residue protein sequence, read N- to C-terminus: tRNA dimethylallyltransferase (328 aa).

Residue 10–17 (GPTASGKT) coordinates ATP. Position 12 to 17 (12 to 17 (TASGKT)) interacts with substrate.

Belongs to the IPP transferase family. In terms of assembly, monomer. Mg(2+) serves as cofactor.

It carries out the reaction adenosine(37) in tRNA + dimethylallyl diphosphate = N(6)-dimethylallyladenosine(37) in tRNA + diphosphate. Its function is as follows. Catalyzes the transfer of a dimethylallyl group onto the adenine at position 37 in tRNAs that read codons beginning with uridine, leading to the formation of N6-(dimethylallyl)adenosine (i(6)A). This is tRNA dimethylallyltransferase from Bifidobacterium longum (strain NCC 2705).